A 248-amino-acid polypeptide reads, in one-letter code: Ras-like protein family member 11B (248 aa).

Positions 30 to 248 (ASSRVIKIAV…SSKVRTATSV (219 aa)) are small GTPase-like. Residues 41-48 (GGSGVGKT), 88-99 (DTPGVQINEQNL), and 153-156 (NKAD) each bind GTP. A disordered region spans residues 206-228 (QNTGTSERRKNSIIPRPKSPNMQ).

Belongs to the small GTPase superfamily. Ras family.

It carries out the reaction GTP + H2O = GDP + phosphate + H(+). The protein is Ras-like protein family member 11B of Xenopus laevis (African clawed frog).